The primary structure comprises 87 residues: Large ribosomal subunit protein bL27 (87 aa).

It belongs to the bacterial ribosomal protein bL27 family.

The chain is Large ribosomal subunit protein bL27 from Renibacterium salmoninarum (strain ATCC 33209 / DSM 20767 / JCM 11484 / NBRC 15589 / NCIMB 2235).